Here is a 187-residue protein sequence, read N- to C-terminus: Large ribosomal subunit protein bL25 (187 aa).

Belongs to the bacterial ribosomal protein bL25 family. CTC subfamily. Part of the 50S ribosomal subunit; part of the 5S rRNA/L5/L18/L25 subcomplex. Contacts the 5S rRNA. Binds to the 5S rRNA independently of L5 and L18.

Its function is as follows. This is one of the proteins that binds to the 5S RNA in the ribosome where it forms part of the central protuberance. The sequence is that of Large ribosomal subunit protein bL25 from Tropheryma whipplei (strain TW08/27) (Whipple's bacillus).